The following is a 570-amino-acid chain: Serine/threonine-protein kinase Pink1, mitochondrial (570 aa).

The transit peptide at 1–5 (MSVRA) directs the protein to the mitochondrion. The Mitochondrial intermembrane segment spans residues 6 to 96 (VGSRLFKHGR…AELRKKATRR (91 aa)). A helical transmembrane segment spans residues 97–120 (ILFGDSAPFFALVGVSIASGTGIL). Residues 121-570 (TKEEELEGVC…WIQENLPELD (450 aa)) are Cytoplasmic-facing. Positions 162-484 (LSLGKPIAKG…VAANVCQLFL (323 aa)) constitute a Protein kinase domain. An ATP-binding site is contributed by Lys-196. Phosphoserine; by autocatalysis is present on Ser-205. Glu-217 provides a ligand contact to Mg(2+). Positions 295, 297, and 300 each coordinate ATP. The active-site Proton acceptor is Asp-337. Position 341 (Asp-341) interacts with ATP. Residues Asn-342 and Asp-359 each coordinate Mg(2+). Asp-359 contributes to the ATP binding site. Ser-377 carries the phosphoserine; by autocatalysis modification. Phosphothreonine; by autocatalysis is present on Thr-386. Thr-530 carries the post-translational modification Phosphothreonine.

This sequence belongs to the protein kinase superfamily. Ser/Thr protein kinase family. Mg(2+) is required as a cofactor. Post-translationally, proteolytically cleaved. In healthy cells, the precursor is continuously imported into mitochondria where it is proteolytically cleaved into its short form by the mitochondrial rhomboid protease rho-7 (TcasGA2_TC013516). The short form is then released into the cytosol where it rapidly undergoes proteasome-dependent degradation. In unhealthy cells, when cellular stress conditions lead to the loss of mitochondrial membrane potential, mitochondrial import is impaired leading to the precursor accumulating on the outer mitochondrial membrane (OMM). Autophosphorylated on Ser-205, which activates kinase activity and is required for substrate recognition. Loss of mitochondrial membrane potential results in the precursor accumulating on the outer mitochondrial membrane (OMM) where it is activated by autophosphorylation at Ser-205. Autophosphorylation is sufficient and essential for selective recruitment of park to depolarized mitochondria, likely via Pink1-dependent phosphorylation of polyubiquitin chains. Also autophosphorylated at Ser-377, Thr-386 and possibly Thr-530. Another report found evidence of autophosphorylation at Ser-154, Thr-186, Thr-218, Ser-267 and Thr-530, as well as a number of other minor sites, but determined that phosphorylation at these sites is not required for enzyme activity and may not occur in vivo.

It is found in the mitochondrion outer membrane. Its subcellular location is the mitochondrion inner membrane. The protein resides in the cytoplasm. The protein localises to the cytosol. The enzyme catalyses L-seryl-[protein] + ATP = O-phospho-L-seryl-[protein] + ADP + H(+). It carries out the reaction L-threonyl-[protein] + ATP = O-phospho-L-threonyl-[protein] + ADP + H(+). Its function is as follows. Acts as a serine/threonine-protein kinase. Exhibits a substrate preference for proline at position P+1 and a general preference at several residues for basic residues such as arginine. Also exhibits moderate preferences for a phosphotyrosine at position P-3 and a tryptophan at P-5. Critical to mitochondrial homeostasis it mediates several pathways that maintain mitochondrial health and function. Protects against mitochondrial dysfunction during cellular stress by phosphorylating mitochondrial proteins such as park and likely Drp1, to coordinate mitochondrial quality control mechanisms that remove and replace dysfunctional mitochondrial components. Depending on the severity of mitochondrial damage and/or dysfunction, activity ranges from preventing apoptosis and stimulating mitochondrial biogenesis to regulating mitochondrial dynamics and eliminating severely damaged mitochondria via mitophagy. Appears to be particularly important in maintaining the physiology and function of cells with high energy demands that are undergoing stress or altered metabolic environment, including spermatids, muscle cells and neurons such as the dopaminergic (DA) neurons. Mediates the translocation and activation of park at the outer membrane (OMM) of dysfunctional/depolarized mitochondria. At the OMM of damaged mitochondria, phosphorylates pre-existing polyubiquitin chains, the Pink1-phosphorylated polyubiquitin then recruits park from the cytosol to the OMM where park is fully activated by phosphorylation at 'Ser-80' by Pink1. When cellular stress results in irreversible mitochondrial damage, functions with park to promote the clearance of dysfunctional and/or depolarized mitochondria by selective autophagy (mitophagy). The Pink1-park pathway also promotes fission and/or inhibits fusion of damaged mitochondria, by phosphorylating and thus promoting the park-dependent degradation of proteins involved in mitochondrial fusion/fission such as Marf, Opa1 and fzo. This prevents the refusion of unhealthy mitochondria with the mitochondrial network or initiates mitochondrial fragmentation facilitating their later engulfment by autophagosomes. Also likely to promote mitochondrial fission independently of park and Atg7-mediated mitophagy, via the phosphorylation and activation of Drp1. Regulates motility of damaged mitochondria by phosphorylating Miro which likely promotes its park-dependent degradation by the proteasome; in motor neurons, this inhibits mitochondrial intracellular anterograde transport along the axons which probably increases the chance of the mitochondria being eliminated in the soma. The Pink1-park pathway is also involved in mitochondrial regeneration processes such as promoting mitochondrial biogenesis, activating localized mitochondrial repair, promoting selective turnover of mitochondrial proteins and initiating the mitochondrial import of endogenous proteins. Involved in mitochondrial biogenesis by promoting the park-dependent ubiquitination of transcriptional repressor Paris which leads to its subsequent proteasomal degradation and allows activation of the transcription factor srl. Functions with park to promote localized mitochondrial repair by activating the translation of specific nuclear-encoded mitochondrial RNAs (nc-mtRNAs) on the mitochondrial surface, including several key electron transport chain component nc-mtRNAs. During oogenesis, phosphorylates and inactivates larp on the membrane of defective mitochondria, thus impairing local translation and mtDNA replication and consequently, reducing transmission of deleterious mtDNA mutations to the mature oocyte. Phosphorylates the mitochondrial acyl-CoA dehydrogenase Mcad, and appears to be important for maintaining fatty acid and amino acid metabolism via a mechanism that is independent of it's role in maintaining production of ATP. The sequence is that of Serine/threonine-protein kinase Pink1, mitochondrial from Tribolium castaneum (Red flour beetle).